Consider the following 284-residue polypeptide: Bifunctional protein FolD (284 aa).

NADP(+)-binding positions include 166–168 and Ile232; that span reads GAS.

It belongs to the tetrahydrofolate dehydrogenase/cyclohydrolase family. Homodimer.

The enzyme catalyses (6R)-5,10-methylene-5,6,7,8-tetrahydrofolate + NADP(+) = (6R)-5,10-methenyltetrahydrofolate + NADPH. It carries out the reaction (6R)-5,10-methenyltetrahydrofolate + H2O = (6R)-10-formyltetrahydrofolate + H(+). The protein operates within one-carbon metabolism; tetrahydrofolate interconversion. Its function is as follows. Catalyzes the oxidation of 5,10-methylenetetrahydrofolate to 5,10-methenyltetrahydrofolate and then the hydrolysis of 5,10-methenyltetrahydrofolate to 10-formyltetrahydrofolate. The sequence is that of Bifunctional protein FolD from Pseudomonas aeruginosa (strain LESB58).